A 641-amino-acid polypeptide reads, in one-letter code: Soluble starch synthase 1, chloroplastic/amyloplastic (641 aa).

The N-terminal 113 residues, 1–113, are a transit peptide targeting the chloroplast; the sequence is MATAAGMGIG…DSIDKTIFVA (113 aa). The tract at residues 62-96 is disordered; the sequence is TFLVPTSTPPAPTQSPAPAPTPPPLPDSGVGEIEP. Over residues 68–87 the composition is skewed to pro residues; that stretch reads STPPAPTQSPAPAPTPPPLP. Lys-147 contacts ADP-alpha-D-glucose.

This sequence belongs to the glycosyltransferase 1 family. Bacterial/plant glycogen synthase subfamily. In terms of tissue distribution, leaves and immature seeds.

The protein localises to the plastid. The protein resides in the chloroplast. Its subcellular location is the amyloplast. It catalyses the reaction [(1-&gt;4)-alpha-D-glucosyl](n) + ADP-alpha-D-glucose = [(1-&gt;4)-alpha-D-glucosyl](n+1) + ADP + H(+). It participates in glycan biosynthesis; starch biosynthesis. Functionally, involved in starch synthesis in endosperm amyloplasts. Plays a role in the elongation of amylopectin chains. Synthesizes preferentially amylopectin chains with a degree of polymerization (DP) of 7 to 11 by elongating chains with a DP of 4 to 7. Generates distincly chains with a DP of 8 to 12 chains from short chains with a DP of 6 to 7. This chain is Soluble starch synthase 1, chloroplastic/amyloplastic, found in Oryza sativa subsp. japonica (Rice).